Consider the following 149-residue polypeptide: DnaJ homolog subfamily C member 24 (149 aa).

One can recognise a J domain in the interval 11–82; it reads DWYSILGADP…ETKKEYDLQR (72 aa). Positions 93–148 constitute a DPH-type MB domain; it reads VDARIYLEEMSWNEDDHSFSLSCRCGGKYSVSKDEAEEVTLISCDTCSLIIELLHY. Zn(2+) is bound by residues Cys115, Cys117, Cys136, and Cys139.

It belongs to the DPH4 family. In terms of assembly, monomer and homooligomer. Iron binding promotes oligomerization.

Its subcellular location is the cytoplasm. It localises to the cytoskeleton. The protein operates within protein modification; peptidyl-diphthamide biosynthesis. In terms of biological role, stimulates the ATPase activity of several Hsp70-type chaperones. This ability is enhanced by iron-binding. The iron-bound form is redox-active and can function as electron carrier. Plays a role in the diphthamide biosynthesis, a post-translational modification of histidine which occurs in translation elongation factor 2 (EEF2). In Bos taurus (Bovine), this protein is DnaJ homolog subfamily C member 24 (DNAJC24).